The sequence spans 262 residues: Indole-3-glycerol phosphate synthase (262 aa).

It belongs to the TrpC family.

It carries out the reaction 1-(2-carboxyphenylamino)-1-deoxy-D-ribulose 5-phosphate + H(+) = (1S,2R)-1-C-(indol-3-yl)glycerol 3-phosphate + CO2 + H2O. Its pathway is amino-acid biosynthesis; L-tryptophan biosynthesis; L-tryptophan from chorismate: step 4/5. This is Indole-3-glycerol phosphate synthase from Aromatoleum aromaticum (strain DSM 19018 / LMG 30748 / EbN1) (Azoarcus sp. (strain EbN1)).